Here is a 785-residue protein sequence, read N- to C-terminus: Putative lipase C4A8.10 (785 aa).

2 disordered regions span residues 29–99 (HSAT…SSDF) and 115–140 (NTNA…VGTS). Residues 32 to 41 (TSSTTVPPTV) show a composition bias toward low complexity. Residues 47-58 (TKKESGSIEDRA) show a composition bias toward basic and acidic residues. Positions 63–86 (MTISSGENISKQISENNSSTNPKH) are enriched in polar residues. 2 stretches are compositionally biased toward low complexity: residues 89–99 (SESSPLLSSDF) and 127–140 (GVSH…VGTS). The active-site Charge relay system is Ser390.

This sequence belongs to the putative lipase ROG1 family.

The sequence is that of Putative lipase C4A8.10 from Schizosaccharomyces pombe (strain 972 / ATCC 24843) (Fission yeast).